We begin with the raw amino-acid sequence, 326 residues long: Zinc finger CCCH domain-containing protein 15 (326 aa).

The segment covering Met-1–Gly-14 has biased composition (gly residues). The tract at residues Met-1–Val-142 is disordered. The segment covering Lys-24–Pro-33 has biased composition (basic residues). Over residues Ser-47 to Lys-64 the composition is skewed to low complexity. A compositionally biased stretch (polar residues) spans Tyr-81–Glu-100. A compositionally biased stretch (basic and acidic residues) spans Glu-104–Lys-125. The C3H1-type zinc finger occupies Asp-187 to Gly-215. The RING-type zinc-finger motif lies at Cys-265–Asn-303.

In Oryza sativa subsp. japonica (Rice), this protein is Zinc finger CCCH domain-containing protein 15.